A 23-amino-acid chain; its full sequence is Coenzyme PQQ synthesis protein A (23 aa).

The pyrroloquinoline quinone (Glu-Tyr) cross-link spans 15–19; it reads EVTLY.

Belongs to the PqqA family.

The protein operates within cofactor biosynthesis; pyrroloquinoline quinone biosynthesis. Functionally, required for coenzyme pyrroloquinoline quinone (PQQ) biosynthesis. PQQ is probably formed by cross-linking a specific glutamate to a specific tyrosine residue and excising these residues from the peptide. The protein is Coenzyme PQQ synthesis protein A of Klebsiella pneumoniae (strain 342).